Reading from the N-terminus, the 258-residue chain is Tegument protein VP22 (258 aa).

A disordered region spans residues 66–143 (VQPAARGRDR…RAPPGANAVA (78 aa)). A compositionally biased stretch (low complexity) spans 77–118 (AAAGTTVAAPAAAPARRSSSRASSRPPRAAADPPVLRPATRG). The short motif at 131-134 (PRPR) is the Nuclear localization signal element. The Nuclear export signal motif lies at 204-216 (LDRMLKSAAIRIL). Residues 234–258 (RAQRPAARGSTSGGESRLRGERARP) are disordered. Positions 249–258 (SRLRGERARP) are enriched in basic and acidic residues.

It belongs to the alphaherpesvirinae VP22 tegument protein family. In terms of assembly, interacts with gE (via C-terminus); this interaction is necessary for the recruitment of VP22 to the Golgi and its packaging into virions. Interacts with gM (via C-terminus). Interacts with VP16; this interaction allows the formation of a tripartite complex composed of VP16, VP22 and UL41/VHS. Interacts with the capsid-binding protein UL16. Interacts with host CGAS. Post-translationally, highly phosphorylated in the host cell. Packaging is selective for underphosphorylated forms.

The protein resides in the virion tegument. It is found in the host cytoplasm. It localises to the host nucleus. The protein localises to the host Golgi apparatus. Tegument protein that plays different roles during the time course of infection. Participates in both the accumulation of viral mRNAs and viral protein translation at late time of infection. Modulates the RNase activity of the virion host shutoff protein UL41 probably to ensure necessary levels of key cellular mRNAs and proteins. Plays a role in microtubule reorganization that occurs after viral infection by stabilizing microtubule network. Plays a role in the inhibition of host innate immune system by targeting the CGAS enzymatic activity which is the principal cytosolic DNA sensor that detects invading viral DNA. Acts by mediating disruption of liquid-like droplets in which CGAS is activated, thereby preventing CGAS activity. This is Tegument protein VP22 from Bovine herpesvirus 1.1 (strain Cooper) (BoHV-1).